A 267-amino-acid chain; its full sequence is MQRIAVMGAAGRMGKTLIEAVSQAEGATLSAAIDRADSSLIGADAGELVGLGKIGVTLAGDLAAMVDDFDVLIDFTHPSVTLKNLEVCRQAGKAMVIGTTGFTVEEKQQLSEAAKQIPIVFAANFSVGVNLCLKLLDTAARVLGDDVDIEIIEAHHRHKVDAPSGTALRMGEVVADALGRDLQKVAVYGREGQTGARERETIGFATVRAGDVVGDHTVLFAADGERVEITHKASSRMTFAKGAVRSALWLQQRSPALYDMQDVLGLR.

NAD(+) is bound by residues Gly-8 to Met-13 and Asp-34. Arg-35 contacts NADP(+). NAD(+)-binding positions include Gly-98–Thr-100 and Ala-122–Phe-125. The Proton donor/acceptor role is filled by His-155. His-156 is a (S)-2,3,4,5-tetrahydrodipicolinate binding site. Catalysis depends on Lys-159, which acts as the Proton donor. Gly-165–Thr-166 is a (S)-2,3,4,5-tetrahydrodipicolinate binding site.

It belongs to the DapB family.

Its subcellular location is the cytoplasm. The enzyme catalyses (S)-2,3,4,5-tetrahydrodipicolinate + NAD(+) + H2O = (2S,4S)-4-hydroxy-2,3,4,5-tetrahydrodipicolinate + NADH + H(+). The catalysed reaction is (S)-2,3,4,5-tetrahydrodipicolinate + NADP(+) + H2O = (2S,4S)-4-hydroxy-2,3,4,5-tetrahydrodipicolinate + NADPH + H(+). It functions in the pathway amino-acid biosynthesis; L-lysine biosynthesis via DAP pathway; (S)-tetrahydrodipicolinate from L-aspartate: step 4/4. Functionally, catalyzes the conversion of 4-hydroxy-tetrahydrodipicolinate (HTPA) to tetrahydrodipicolinate. This chain is 4-hydroxy-tetrahydrodipicolinate reductase, found in Ectopseudomonas mendocina (strain ymp) (Pseudomonas mendocina).